The primary structure comprises 407 residues: MKYDHLLVRYGELTLKGSNRKKFVNQLRNNVNKSLKGLDGFVVKGKRDRMYIELEDHADINEITYRLSKIFGIKSISPVLKVEKTIEAISAAAIKFAQQFEENSTFKIDVKRADKNFPMDTYELQRELGGAVLKHFDNISVNVKRPDHEIRVEVRLDAIYMYEEVVPGSGGLPVGTGGKTLLMLSGGIDSPVAGMEVMRRGVTIEAIHFHSPPFTSDQAKEKVIELTRILAERVGPIKLHIVPFTELQKQVNKVVHPRYTMTSTRRMMMRVADKLVHQIGALAIVNGENLGQVASQTLHSMYAINNVTSTPVLRPLLTYDKEEIIIKSKEIGTFETSIQPFEDCCTIFTPKNPVTEPNFDKVVQYESVFDFEEMINRAVENIETLEITSDYKTIKEQQTNQLINDFL.

The 105-residue stretch at 61–165 (NEITYRLSKI…LDAIYMYEEV (105 aa)) folds into the THUMP domain. ATP is bound by residues 183 to 184 (ML), 208 to 209 (HF), Arg-265, Gly-287, and Gln-296.

The protein belongs to the ThiI family.

The protein localises to the cytoplasm. The enzyme catalyses [ThiI sulfur-carrier protein]-S-sulfanyl-L-cysteine + a uridine in tRNA + 2 reduced [2Fe-2S]-[ferredoxin] + ATP + H(+) = [ThiI sulfur-carrier protein]-L-cysteine + a 4-thiouridine in tRNA + 2 oxidized [2Fe-2S]-[ferredoxin] + AMP + diphosphate. It catalyses the reaction [ThiS sulfur-carrier protein]-C-terminal Gly-Gly-AMP + S-sulfanyl-L-cysteinyl-[cysteine desulfurase] + AH2 = [ThiS sulfur-carrier protein]-C-terminal-Gly-aminoethanethioate + L-cysteinyl-[cysteine desulfurase] + A + AMP + 2 H(+). It participates in cofactor biosynthesis; thiamine diphosphate biosynthesis. Its function is as follows. Catalyzes the ATP-dependent transfer of a sulfur to tRNA to produce 4-thiouridine in position 8 of tRNAs, which functions as a near-UV photosensor. Also catalyzes the transfer of sulfur to the sulfur carrier protein ThiS, forming ThiS-thiocarboxylate. This is a step in the synthesis of thiazole, in the thiamine biosynthesis pathway. The sulfur is donated as persulfide by IscS. The sequence is that of Probable tRNA sulfurtransferase from Staphylococcus aureus (strain NCTC 8325 / PS 47).